Reading from the N-terminus, the 1104-residue chain is Carbamoyl phosphate synthase large chain (1104 aa).

The tract at residues 1-402 (MPRRTDLKSV…ALQKALRSTE (402 aa)) is carboxyphosphate synthetic domain. ATP contacts are provided by Arg129, Arg169, Gly175, Gly176, Glu208, Ile210, Glu215, Gly241, Val242, His243, Gln285, and Glu299. The region spanning 133–328 (KGVVERCGAE…IAKIAARLAV (196 aa)) is the ATP-grasp 1 domain. 3 residues coordinate Mg(2+): Gln285, Glu299, and Asn301. The Mn(2+) site is built by Gln285, Glu299, and Asn301. The segment at 403 to 547 (KRGATFSWAG…YSSYDEEDET (145 aa)) is oligomerization domain. Residues 548–948 (RPREKAAIVI…AFGKSQTAAY (401 aa)) are carbamoyl phosphate synthetic domain. In terms of domain architecture, ATP-grasp 2 spans 676 to 867 (GQVLERAGLV…LAKAAARLMA (192 aa)). ATP-binding residues include Arg712, Arg751, Leu753, Glu758, Gly783, Ile784, His785, Ser786, Gln826, and Glu838. Mg(2+) is bound by residues Gln826, Glu838, and Asn840. Gln826, Glu838, and Asn840 together coordinate Mn(2+). The MGS-like domain occupies 949 to 1099 (GGLPTAGTAF…QEHTARLNAA (151 aa)). The tract at residues 949–1104 (GGLPTAGTAF…RLNAAWEGRA (156 aa)) is allosteric domain.

Belongs to the CarB family. As to quaternary structure, composed of two chains; the small (or glutamine) chain promotes the hydrolysis of glutamine to ammonia, which is used by the large (or ammonia) chain to synthesize carbamoyl phosphate. Tetramer of heterodimers (alpha,beta)4. Requires Mg(2+) as cofactor. It depends on Mn(2+) as a cofactor.

It carries out the reaction hydrogencarbonate + L-glutamine + 2 ATP + H2O = carbamoyl phosphate + L-glutamate + 2 ADP + phosphate + 2 H(+). The enzyme catalyses hydrogencarbonate + NH4(+) + 2 ATP = carbamoyl phosphate + 2 ADP + phosphate + 2 H(+). The protein operates within amino-acid biosynthesis; L-arginine biosynthesis; carbamoyl phosphate from bicarbonate: step 1/1. It participates in pyrimidine metabolism; UMP biosynthesis via de novo pathway; (S)-dihydroorotate from bicarbonate: step 1/3. Large subunit of the glutamine-dependent carbamoyl phosphate synthetase (CPSase). CPSase catalyzes the formation of carbamoyl phosphate from the ammonia moiety of glutamine, carbonate, and phosphate donated by ATP, constituting the first step of 2 biosynthetic pathways, one leading to arginine and/or urea and the other to pyrimidine nucleotides. The large subunit (synthetase) binds the substrates ammonia (free or transferred from glutamine from the small subunit), hydrogencarbonate and ATP and carries out an ATP-coupled ligase reaction, activating hydrogencarbonate by forming carboxy phosphate which reacts with ammonia to form carbamoyl phosphate. The protein is Carbamoyl phosphate synthase large chain of Kineococcus radiotolerans (strain ATCC BAA-149 / DSM 14245 / SRS30216).